The chain runs to 58 residues: Ikitoxin (58 aa).

The LCN-type CS-alpha/beta domain maps to 3 to 58 (VPGNYPLDKDGNTYKCFLLGENEECLNVCKLHGVQYGYCYASKCWCEYLEDDKDSV). Intrachain disulfides connect C18-C41, C27-C46, and C31-C48.

As to expression, expressed by the venom gland.

It is found in the secreted. In terms of biological role, beta toxins bind voltage-independently at site-4 of sodium channels (Nav) and shift the voltage of activation toward more negative potentials thereby affecting sodium channel activation and promoting spontaneous and repetitive firing. Does not produce effect when administered to blowfly and cabbage looper larvae. In mice, does not produce convulsions, tremors, increased ventilation nor death. The protein is Ikitoxin of Parabuthus transvaalicus (Transvaal thick-tailed scorpion).